The sequence spans 664 residues: Chaperone protein dnaK1 (664 aa).

Thr198 is modified (phosphothreonine; by autocatalysis).

The protein belongs to the heat shock protein 70 family.

Its function is as follows. Acts as a chaperone. This Prochlorococcus marinus (strain MIT 9313) protein is Chaperone protein dnaK1 (dnaK1).